The chain runs to 193 residues: Bcl-2-binding component 3 (193 aa).

Disordered stretches follow at residues Met1–Met31 and Ala71–Glu131. Ser10 bears the Phosphoserine mark. A BH3 motif is present at residues Ile137 to Gln151.

The protein belongs to the Bcl-2 family. In terms of assembly, interacts with MCL1 and BCL2A1. Interacts with BCL2 and BCL2L1/BCL-XL. Interacts (via BH3 domain) with NOL3 (via CARD domain); this interaction prevents BBC3 association with BCL2 and results in CASP8 activation.

Its subcellular location is the mitochondrion. Essential mediator of p53/TP53-dependent and p53/TP53-independent apoptosis. Promotes partial unfolding of BCL2L1 and dissociation of BCL2L1 from p53/TP53, releasing the bound p53/TP53 to induce apoptosis. Regulates ER stress-induced neuronal apoptosis. The protein is Bcl-2-binding component 3 (Bbc3) of Mus musculus (Mouse).